The chain runs to 407 residues: Putative mannan endo-1,4-beta-mannosidase 9 (407 aa).

An N-terminal signal peptide occupies residues 1–31 (MGSKRRVILLPTLGVVVLAIAAAVLLHAGEA). Substrate-binding residues include Trp95 and Asn208. The active-site Proton donor is Glu209. Tyr284 contributes to the substrate binding site. Glu324 functions as the Nucleophile in the catalytic mechanism. Position 366 (Trp366) interacts with substrate.

The protein belongs to the glycosyl hydrolase 5 (cellulase A) family. As to expression, expression not detected.

The protein resides in the secreted. It catalyses the reaction Random hydrolysis of (1-&gt;4)-beta-D-mannosidic linkages in mannans, galactomannans and glucomannans.. The protein is Putative mannan endo-1,4-beta-mannosidase 9 (MAN9) of Oryza sativa subsp. japonica (Rice).